The chain runs to 219 residues: DAN domain family member 5 (219 aa).

Residues M1–A19 form the signal peptide. Intrachain disulfides connect C118/C165, C132/C179, C142/C195, and C146/C197. Residues C118–E198 enclose the CTCK domain.

This sequence belongs to the DAN family. In terms of assembly, interacts with nr1-a.

It is found in the secreted. Plays an important role in regulating the left-right axis by blocking a tgfb1 cascade in the right posterior paraxial mesoderm. Functions as an inhibitor of bmp, tgfb1, nodal, activin and wnt signaling in the ectoderm. May inhibit mesodermal signals, probably through an inhibition of nodal/activin pathways. Seems to regulates cell fate specification and competence before the onset of neural induction. Expression in the entire ectodermal region prior to gastrulation might act to prevent fate specification in the ectoderm and ensure the maintenance of the stem-cell-like properties exhibited by ectodermal cells. In Xenopus tropicalis (Western clawed frog), this protein is DAN domain family member 5 (dand5).